The following is a 206-amino-acid chain: Pyridoxine/pyridoxamine 5'-phosphate oxidase (206 aa).

FMN is bound by residues 53–58 (RMVLLK), 68–69 (YT), lysine 75, and glutamine 97. Lysine 58 is a substrate binding site. Substrate-binding residues include tyrosine 115, arginine 119, and serine 123. FMN-binding positions include 132 to 133 (QS) and tryptophan 177. Substrate is bound at residue 183–185 (RLH). Arginine 187 serves as a coordination point for FMN.

The protein belongs to the pyridoxamine 5'-phosphate oxidase family. As to quaternary structure, homodimer. FMN is required as a cofactor.

The catalysed reaction is pyridoxamine 5'-phosphate + O2 + H2O = pyridoxal 5'-phosphate + H2O2 + NH4(+). The enzyme catalyses pyridoxine 5'-phosphate + O2 = pyridoxal 5'-phosphate + H2O2. The protein operates within cofactor metabolism; pyridoxal 5'-phosphate salvage; pyridoxal 5'-phosphate from pyridoxamine 5'-phosphate: step 1/1. Its pathway is cofactor metabolism; pyridoxal 5'-phosphate salvage; pyridoxal 5'-phosphate from pyridoxine 5'-phosphate: step 1/1. Catalyzes the oxidation of either pyridoxine 5'-phosphate (PNP) or pyridoxamine 5'-phosphate (PMP) into pyridoxal 5'-phosphate (PLP). The chain is Pyridoxine/pyridoxamine 5'-phosphate oxidase from Rhizobium leguminosarum bv. trifolii (strain WSM2304).